Here is a 298-residue protein sequence, read N- to C-terminus: Bifunctional protein FolD (298 aa).

NADP(+)-binding positions include 166 to 168 (GRS), Ser-191, and Ile-232.

Belongs to the tetrahydrofolate dehydrogenase/cyclohydrolase family. In terms of assembly, homodimer.

The enzyme catalyses (6R)-5,10-methylene-5,6,7,8-tetrahydrofolate + NADP(+) = (6R)-5,10-methenyltetrahydrofolate + NADPH. It carries out the reaction (6R)-5,10-methenyltetrahydrofolate + H2O = (6R)-10-formyltetrahydrofolate + H(+). The protein operates within one-carbon metabolism; tetrahydrofolate interconversion. Functionally, catalyzes the oxidation of 5,10-methylenetetrahydrofolate to 5,10-methenyltetrahydrofolate and then the hydrolysis of 5,10-methenyltetrahydrofolate to 10-formyltetrahydrofolate. The sequence is that of Bifunctional protein FolD from Maricaulis maris (strain MCS10) (Caulobacter maris).